The chain runs to 494 residues: 3-octaprenyl-4-hydroxybenzoate carboxy-lyase (494 aa).

N172 is a Mn(2+) binding site. Prenylated FMN is bound by residues 175 to 177 (IYR), 189 to 191 (RWL), and 194 to 195 (RG). Position 238 (E238) interacts with Mn(2+). D287 acts as the Proton donor in catalysis.

This sequence belongs to the UbiD family. In terms of assembly, homohexamer. It depends on prenylated FMN as a cofactor. Mn(2+) is required as a cofactor.

The protein resides in the cell membrane. It carries out the reaction a 4-hydroxy-3-(all-trans-polyprenyl)benzoate + H(+) = a 2-(all-trans-polyprenyl)phenol + CO2. Its pathway is cofactor biosynthesis; ubiquinone biosynthesis. In terms of biological role, catalyzes the decarboxylation of 3-octaprenyl-4-hydroxy benzoate to 2-octaprenylphenol, an intermediate step in ubiquinone biosynthesis. The protein is 3-octaprenyl-4-hydroxybenzoate carboxy-lyase of Cronobacter sakazakii (strain ATCC BAA-894) (Enterobacter sakazakii).